The following is a 682-amino-acid chain: Serine/threonine-protein kinase PAK 6 (682 aa).

Disordered stretches follow at residues 1 to 30 (MFRKKKKKRPEISAPQNFQHRVHTSFDPKE), 132 to 170 (SPQSEHTDPHGLYLSCNGGTPAGHRQVPWPEPQSPQALP), 200 to 256 (LQSS…QESS), and 270 to 367 (PATG…NLYL). In terms of domain architecture, CRIB spans 12 to 25 (ISAPQNFQHRVHTS). The tract at residues 26-407 (FDPKEGKFVG…VVDQGDPRLL (382 aa)) is linker. 2 stretches are compositionally biased toward polar residues: residues 270–279 (PATGAASSSK) and 297–334 (KDSSSNLVAKAQSLPSEQPMGTFSPLTTSDTSSPQKSL). In terms of domain architecture, Protein kinase spans 408–659 (LDSYVKIGEG…AQELLDHPFL (252 aa)). ATP contacts are provided by residues 414 to 422 (IGEGSTGIV) and Lys437. Asp527 (proton acceptor) is an active-site residue. Ser561 carries the post-translational modification Phosphoserine; by autocatalysis.

It belongs to the protein kinase superfamily. STE Ser/Thr protein kinase family. STE20 subfamily. Interacts tightly with GTP-bound but not GDP-bound CDC42/p21 and RAC1. Interacts with the androgen receptor AR. Interacts with IQGAP1 and PPM1B. In terms of processing, autophosphorylated. Phosphorylated by MAP2K6/MAPKK6, leading to PAK6 activation.

It localises to the cytoplasm. The protein resides in the nucleus. It carries out the reaction L-seryl-[protein] + ATP = O-phospho-L-seryl-[protein] + ADP + H(+). It catalyses the reaction L-threonyl-[protein] + ATP = O-phospho-L-threonyl-[protein] + ADP + H(+). In terms of biological role, serine/threonine protein kinase that plays a role in the regulation of gene transcription. The kinase activity is induced by various effectors including AR or MAP2K6/MAPKK6. Phosphorylates the DNA-binding domain of androgen receptor/AR and thereby inhibits AR-mediated transcription. Also inhibits ESR1-mediated transcription. May play a role in cytoskeleton regulation by interacting with IQGAP1. May protect cells from apoptosis through phosphorylation of BAD. The protein is Serine/threonine-protein kinase PAK 6 (Pak6) of Mus musculus (Mouse).